Consider the following 1040-residue polypeptide: Multidrug resistance protein MdtB (1040 aa).

Transmembrane regions (helical) follow at residues Phe-16–Ile-36, Leu-347–Ala-367, Ile-369–Leu-389, Leu-396–Ile-416, Ile-440–Phe-460, Phe-472–Pro-492, Trp-537–Ile-557, Leu-863–Ile-883, Phe-888–Ala-908, Ile-911–Val-931, Ile-968–Val-988, and Ile-998–Ile-1018.

It belongs to the resistance-nodulation-cell division (RND) (TC 2.A.6) family. MdtB subfamily. As to quaternary structure, part of a tripartite efflux system composed of MdtA, MdtB and MdtC. MdtB forms a heteromultimer with MdtC.

Its subcellular location is the cell inner membrane. In Shigella sonnei (strain Ss046), this protein is Multidrug resistance protein MdtB.